The primary structure comprises 405 residues: Adenylosuccinate synthetase (405 aa).

Residues 12–18 (GDEGKGK) and 40–42 (GHT) each bind GTP. Asp13 (proton acceptor) is an active-site residue. Mg(2+) contacts are provided by Asp13 and Gly40. IMP-binding positions include 13–16 (DEGK), 38–41 (NAGH), Thr121, Arg135, Gln213, Thr228, and Arg297. Residue His41 is the Proton donor of the active site. 293-299 (TTTGRPR) contacts substrate. GTP is bound by residues Arg299, 325–327 (KMD), and 390–392 (SAG).

It belongs to the adenylosuccinate synthetase family. Homodimer. Mg(2+) is required as a cofactor.

It is found in the cytoplasm. It catalyses the reaction IMP + L-aspartate + GTP = N(6)-(1,2-dicarboxyethyl)-AMP + GDP + phosphate + 2 H(+). It participates in purine metabolism; AMP biosynthesis via de novo pathway; AMP from IMP: step 1/2. Functionally, plays an important role in the de novo pathway of purine nucleotide biosynthesis. Catalyzes the first committed step in the biosynthesis of AMP from IMP. The chain is Adenylosuccinate synthetase from Deinococcus radiodurans (strain ATCC 13939 / DSM 20539 / JCM 16871 / CCUG 27074 / LMG 4051 / NBRC 15346 / NCIMB 9279 / VKM B-1422 / R1).